The primary structure comprises 87 residues: Small ribosomal subunit protein bS20 (87 aa).

Positions 1–26 (MANHKSAIKRHKQSQKRAARNRAAKT) are disordered.

The protein belongs to the bacterial ribosomal protein bS20 family.

Binds directly to 16S ribosomal RNA. The protein is Small ribosomal subunit protein bS20 of Nitratidesulfovibrio vulgaris (strain DSM 19637 / Miyazaki F) (Desulfovibrio vulgaris).